The sequence spans 154 residues: Large ribosomal subunit protein uL22 (154 aa).

This sequence belongs to the universal ribosomal protein uL22 family. In terms of assembly, part of the 50S ribosomal subunit.

Its function is as follows. This protein binds specifically to 23S rRNA. It makes multiple contacts with different domains of the 23S rRNA in the assembled 50S subunit and ribosome. In terms of biological role, the globular domain of the protein is located near the polypeptide exit tunnel on the outside of the subunit, while an extended beta-hairpin is found that lines the wall of the exit tunnel in the center of the 70S ribosome. This chain is Large ribosomal subunit protein uL22, found in Methanosphaera stadtmanae (strain ATCC 43021 / DSM 3091 / JCM 11832 / MCB-3).